The sequence spans 70 residues: Putative membrane protein insertion efficiency factor (70 aa).

The protein belongs to the UPF0161 family.

It localises to the cell membrane. Could be involved in insertion of integral membrane proteins into the membrane. This is Putative membrane protein insertion efficiency factor from Lachnoclostridium phytofermentans (strain ATCC 700394 / DSM 18823 / ISDg) (Clostridium phytofermentans).